Here is a 527-residue protein sequence, read N- to C-terminus: GMP synthase [glutamine-hydrolyzing] (527 aa).

The 199-residue stretch at 4–202 (KILILDFGSQ…VLKICGAKPD (199 aa)) folds into the Glutamine amidotransferase type-1 domain. Residue cysteine 81 is the Nucleophile of the active site. Catalysis depends on residues histidine 176 and glutamate 178. The region spanning 203–395 (WEMGNYIDEA…LGLPPSMVYR (193 aa)) is the GMPS ATP-PPase domain. 230–236 (SGGVDSS) provides a ligand contact to ATP.

Homodimer.

The catalysed reaction is XMP + L-glutamine + ATP + H2O = GMP + L-glutamate + AMP + diphosphate + 2 H(+). It participates in purine metabolism; GMP biosynthesis; GMP from XMP (L-Gln route): step 1/1. In terms of biological role, catalyzes the synthesis of GMP from XMP. This chain is GMP synthase [glutamine-hydrolyzing], found in Paraburkholderia phymatum (strain DSM 17167 / CIP 108236 / LMG 21445 / STM815) (Burkholderia phymatum).